A 362-amino-acid chain; its full sequence is Ferredoxin--NADP reductase 1 (362 aa).

Residues Asp-47, Gln-55, Tyr-60, Ala-100, Phe-141, Asp-309, and Ser-350 each contribute to the FAD site.

This sequence belongs to the ferredoxin--NADP reductase type 2 family. As to quaternary structure, homodimer. The cofactor is FAD.

It carries out the reaction 2 reduced [2Fe-2S]-[ferredoxin] + NADP(+) + H(+) = 2 oxidized [2Fe-2S]-[ferredoxin] + NADPH. The protein is Ferredoxin--NADP reductase 1 of Cupriavidus pinatubonensis (strain JMP 134 / LMG 1197) (Cupriavidus necator (strain JMP 134)).